Here is a 210-residue protein sequence, read N- to C-terminus: Large ribosomal subunit protein uL4 (210 aa).

Positions 47–64 (SRQGTRSQKSRSEVSGSN) are enriched in polar residues. Residues 47-83 (SRQGTRSQKSRSEVSGSNKKPWRQKGTGRARSGSVKS) form a disordered region.

Belongs to the universal ribosomal protein uL4 family. As to quaternary structure, part of the 50S ribosomal subunit.

Functionally, one of the primary rRNA binding proteins, this protein initially binds near the 5'-end of the 23S rRNA. It is important during the early stages of 50S assembly. It makes multiple contacts with different domains of the 23S rRNA in the assembled 50S subunit and ribosome. Forms part of the polypeptide exit tunnel. The polypeptide is Large ribosomal subunit protein uL4 (Blochmanniella pennsylvanica (strain BPEN)).